Reading from the N-terminus, the 314-residue chain is MDFKDYYKILDVEPAADDKAIKTAYRKLARKYHPDVSKEAGAEDKFKEASEAYEVLSSPEKRAEYDELRKYGRQGRPFQTPPGWQSRAGAGAGGFEETADFSEFFSSIFGGRPQQGGRTRNPGRKGQDVEMELAVFLEETLSGESKQVSFKVPQHSPNGQRMGDITKTLNVKIPAGVVDGERIRLKGQGAPGIGGGANGDLYLIIRLAPHPMFEVEGHDLVITVPLAPWEAALGTKVAVPTLTSRLNLTIRPDSQNGQRLRIKGNGLMNKSGERGDLYAQLKIVMPKQTDEAARALWQKLADSAAFDPRAQWKG.

One can recognise a J domain in the interval 5 to 69 (DYYKILDVEP…EKRAEYDELR (65 aa)). The tract at residues 73 to 92 (RQGRPFQTPPGWQSRAGAGA) is disordered.

The protein resides in the cytoplasm. It localises to the nucleoid. Its function is as follows. DNA-binding protein that preferentially recognizes a curved DNA sequence. It is probably a functional analog of DnaJ; displays overlapping activities with DnaJ, but functions under different conditions, probably acting as a molecular chaperone in an adaptive response to environmental stresses other than heat shock. Lacks autonomous chaperone activity; binds native substrates and targets them for recognition by DnaK. Its activity is inhibited by the binding of CbpM. The polypeptide is Curved DNA-binding protein (Pseudomonas syringae pv. tomato (strain ATCC BAA-871 / DC3000)).